The primary structure comprises 227 residues: Ion-translocating oxidoreductase complex subunit E (227 aa).

6 consecutive transmembrane segments (helical) span residues 18 to 38, 39 to 59, 69 to 89, 93 to 113, 125 to 145, and 182 to 202; these read ALVQ…VTNA, LGLG…VSLV, IPVF…LMNA, GLYL…IIIG, LPAV…LVLL, and HFLL…LIAL.

Belongs to the NqrDE/RnfAE family. As to quaternary structure, the complex is composed of six subunits: RnfA, RnfB, RnfC, RnfD, RnfE and RnfG.

The protein resides in the cell inner membrane. Part of a membrane-bound complex that couples electron transfer with translocation of ions across the membrane. This is Ion-translocating oxidoreductase complex subunit E from Aliivibrio fischeri (strain ATCC 700601 / ES114) (Vibrio fischeri).